The following is a 344-amino-acid chain: Arginine N-succinyltransferase (344 aa).

Leucine 125 provides a ligand contact to succinyl-CoA. Catalysis depends on histidine 229, which acts as the Proton donor.

Belongs to the arginine N-succinyltransferase family.

The enzyme catalyses succinyl-CoA + L-arginine = N(2)-succinyl-L-arginine + CoA + H(+). The protein operates within amino-acid degradation; L-arginine degradation via AST pathway; L-glutamate and succinate from L-arginine: step 1/5. Functionally, catalyzes the transfer of succinyl-CoA to arginine to produce N(2)-succinylarginine. This Shigella sonnei (strain Ss046) protein is Arginine N-succinyltransferase.